The primary structure comprises 329 residues: Vitamin B12 import system permease protein BtuC (329 aa).

Transmembrane regions (helical) follow at residues 18-38 (WLLS…CAGE), 64-84 (LAVL…QALF), 91-111 (PGLL…VLLG), 115-135 (LPGW…TLIL), 149-169 (LLAG…AIYF), 191-208 (WQQS…IWIC), 243-263 (GWMV…GLVI), 277-297 (VLLP…DVVA), and 305-325 (ELPI…WLLL).

Belongs to the binding-protein-dependent transport system permease family. FecCD subfamily. In terms of assembly, the complex is composed of two ATP-binding proteins (BtuD), two transmembrane proteins (BtuC) and a solute-binding protein (BtuF).

It is found in the cell inner membrane. Its function is as follows. Part of the ABC transporter complex BtuCDF involved in vitamin B12 import. Involved in the translocation of the substrate across the membrane. The protein is Vitamin B12 import system permease protein BtuC of Salmonella arizonae (strain ATCC BAA-731 / CDC346-86 / RSK2980).